The sequence spans 389 residues: Alpha-2B adrenergic receptor (389 aa).

A helical transmembrane segment spans residues 1–25 (AIAAVITFLILFTIFGNALVILAVL). Topologically, residues 26 to 36 (TSRSLRAPQNL) are cytoplasmic. Residues 37–62 (FLVSLAAADILVATLIIPFSLANELL) form a helical membrane-spanning segment. The Extracellular segment spans residues 63-72 (GYWYFWRTWC). The cysteines at positions 72 and 151 are disulfide-linked. A helical transmembrane segment spans residues 73 to 95 (EVYLALDVLFCTSSIVHLCAISL). Residues 96–117 (DRYWAVSRALEYNSKRTPRRIK) are Cytoplasmic-facing. Residues 118–140 (CIILTVWLIAAAISLPPLIYKGD) form a helical membrane-spanning segment. Residues 141 to 156 (QGPQPRGRPQCMLNQE) are Extracellular-facing. A helical transmembrane segment spans residues 157–180 (AWYILSSSIGSFFAPCLIMILVYL). The Cytoplasmic segment spans residues 181-353 (RIYLIAKRSN…LTREKRFTFV (173 aa)). Disordered regions lie at residues 192–218 (RGPR…PLAL) and 231–310 (DGEA…HLQQ). Basic and acidic residues predominate over residues 234-249 (ANGHSKLTGEKERETS). Residues 354-377 (LTVVIGVFVLCWFPFFFSYSLGAI) traverse the membrane as a helical segment. The Extracellular portion of the chain corresponds to 378-386 (CPQHCKVPH). The helical transmembrane segment at 387 to 389 (GLF) threads the bilayer.

The protein belongs to the G-protein coupled receptor 1 family. Adrenergic receptor subfamily. ADRA2B sub-subfamily. Interacts with RAB26. Interacts with PPP1R9B.

It is found in the cell membrane. Functionally, alpha-2 adrenergic receptors mediate the catecholamine-induced inhibition of adenylate cyclase through the action of G proteins. The chain is Alpha-2B adrenergic receptor (ADRA2B) from Procavia capensis habessinica (Abyssinian hyrax).